We begin with the raw amino-acid sequence, 383 residues long: Na(+)/H(+) antiporter NhaA (383 aa).

The next 11 membrane-spanning stretches (helical) occupy residues 10-30, 56-76, 91-111, 121-141, 150-170, 174-194, 206-226, 254-274, 289-308, 327-347, and 355-375; these read LIGG…NNSP, LMHW…GLEI, IITP…IYLS, GWAI…ALLG, LLVI…IAIF, SLSL…IICN, VVLG…ATLA, PWII…ISFS, IIWG…LAVF, GISL…VLAF, and AIKI…YIVL.

It belongs to the NhaA Na(+)/H(+) (TC 2.A.33) antiporter family.

The protein resides in the cell inner membrane. The enzyme catalyses Na(+)(in) + 2 H(+)(out) = Na(+)(out) + 2 H(+)(in). Its function is as follows. Na(+)/H(+) antiporter that extrudes sodium in exchange for external protons. This Francisella tularensis subsp. holarctica (strain FTNF002-00 / FTA) protein is Na(+)/H(+) antiporter NhaA.